Here is a 193-residue protein sequence, read N- to C-terminus: Xanthine phosphoribosyltransferase (193 aa).

2 residues coordinate xanthine: Leu-20 and Asn-27. 127-131 (AYGNA) serves as a coordination point for 5-phospho-alpha-D-ribose 1-diphosphate. Lys-155 is a xanthine binding site.

Belongs to the purine/pyrimidine phosphoribosyltransferase family. Xpt subfamily. As to quaternary structure, homodimer.

The protein resides in the cytoplasm. The catalysed reaction is XMP + diphosphate = xanthine + 5-phospho-alpha-D-ribose 1-diphosphate. Its pathway is purine metabolism; XMP biosynthesis via salvage pathway; XMP from xanthine: step 1/1. Its function is as follows. Converts the preformed base xanthine, a product of nucleic acid breakdown, to xanthosine 5'-monophosphate (XMP), so it can be reused for RNA or DNA synthesis. This Porphyromonas gingivalis (strain ATCC BAA-308 / W83) protein is Xanthine phosphoribosyltransferase.